A 137-amino-acid chain; its full sequence is Thionin BTH7 (137 aa).

A signal peptide spans 1 to 28; it reads MATNKSIKSVVICVLILGLVLEQVQVEG. 4 disulfides stabilise this stretch: Cys31–Cys68, Cys32–Cys60, Cys40–Cys58, and Cys44–Cys54. The propeptide at 75–137 is acidic domain; it reads LNLLPESGEP…DGEVIQSVEA (63 aa).

Belongs to the plant thionin (TC 1.C.44) family. 4 C-C subfamily.

It is found in the secreted. In terms of biological role, thionins are small plant proteins which are toxic to animal cells. They seem to exert their toxic effect at the level of the cell membrane. Their precise function is not known. The polypeptide is Thionin BTH7 (Hordeum vulgare (Barley)).